The sequence spans 563 residues: Efflux pump notK (563 aa).

Residues 1–32 (MTKDEDSGTTDGGYSTPDIAVQEKQDQPPAPE) form a disordered region. A run of 14 helical transmembrane segments spans residues 48 to 68 (IFLS…AIPG), 78 to 98 (DVGW…PMWG), 108 to 128 (LVYL…AAAP), 138 to 158 (ALQG…ISYV), 165 to 185 (AMLI…GPLL), 197 to 217 (WCFW…VLFF), 239 to 259 (LPGF…LQWG), 270 to 290 (VIAT…VEWI), 312 to 332 (LYGW…PIYF), 345 to 365 (VNSL…GFLI), 374 to 394 (YEFA…TLDI), 406 to 426 (VIFG…LESF), 438 to 458 (VMLM…QSIF), and 509 to 529 (VFAF…AIPF). The disordered stretch occupies residues 538 to 563 (GPSNGQEEEEGKKDGPAEKKEDEVAV). A compositionally biased stretch (basic and acidic residues) spans 547–563 (EGKKDGPAEKKEDEVAV).

Belongs to the major facilitator superfamily. TCR/Tet family.

The protein localises to the cell membrane. In terms of biological role, efflux pump; part of the gene cluster that mediates the biosynthesis of notoamide, a fungal indole alkaloid that belongs to a family of natural products containing a characteristic bicyclo[2.2.2]diazaoctane core. The protein is Efflux pump notK of Aspergillus sp. (strain MF297-2).